The primary structure comprises 398 residues: Protein CDKN2AIP homolog A (398 aa).

Residues 19–124 enclose the XRN2-binding (XTBD) domain; it reads LELVHGECES…KVKKRGISSS (106 aa). The disordered stretch occupies residues 118-245; the sequence is KRGISSSNEG…SDNALKPTRR (128 aa). The span at 131-147 shows a compositional bias: basic and acidic residues; that stretch reads EPCKKQKSSDHGERESS. Composition is skewed to polar residues over residues 154–163, 189–199, and 226–238; these read SDGNVPSTSL, RRSLPVSNAKS, and QTSM…SSDN.

The protein belongs to the CARF family.

Its subcellular location is the nucleus. It localises to the nucleoplasm. In terms of biological role, may regulate DNA damage response and cell proliferation. This chain is Protein CDKN2AIP homolog A (cdkn2aip-a), found in Xenopus laevis (African clawed frog).